Here is a 147-residue protein sequence, read N- to C-terminus: Putative 2'-deoxynucleoside 5'-phosphate N-hydrolase 1 (147 aa).

Residues 10–16 (YFCGSIR), Tyr-25, His-42, Glu-90, and 114–116 (SAM) each bind substrate.

The protein belongs to the 2'-deoxynucleoside 5'-phosphate N-hydrolase 1 family. As to quaternary structure, monomer and homodimer.

The protein localises to the cytoplasm. Its subcellular location is the nucleus. The catalysed reaction is a pyrimidine 2'-deoxyribonucleoside 5'-phosphate + H2O = a pyrimidine nucleobase + 2-deoxy-D-ribose 5-phosphate. It carries out the reaction a purine 2'-deoxyribonucleoside 5'-phosphate + H2O = a purine nucleobase + 2-deoxy-D-ribose 5-phosphate. Catalyzes the cleavage of the N-glycosidic bond of deoxyribonucleoside 5'-monophosphates to yield deoxyribose 5-phosphate and a purine or pyrimidine base. In Nematostella vectensis (Starlet sea anemone), this protein is Putative 2'-deoxynucleoside 5'-phosphate N-hydrolase 1.